The following is a 434-amino-acid chain: Putative nuclease OPG089 (434 aa).

It belongs to the XPG/RAD2 endonuclease family. FEN1 subfamily. It depends on Mg(2+) as a cofactor.

The protein localises to the virion. Its function is as follows. Putative nuclease that seems to be required for double-strand break repair, homologous recombination, and production of full-length viral genomic DNA. This is Putative nuclease OPG089 (OPG089) from Monkeypox virus.